A 221-amino-acid chain; its full sequence is Probable N-acetyl-alpha-D-glucosaminyl L-malate deacetylase 2 (221 aa).

H11, D14, and H125 together coordinate Zn(2+).

This sequence belongs to the PIGL family. The cofactor is Zn(2+).

It carries out the reaction (S)-malyl N-acetyl-alpha-D-glucosaminide + H2O = (S)-malyl alpha-D-glucosaminide + acetate. Its function is as follows. Involved in bacillithiol (BSH) biosynthesis. Catalyzes the second step of the pathway, the deacetylation of N-acetylglucosaminylmalate (GlcNAc-Mal) to glucosamine malate (GlcN-Mal). The sequence is that of Probable N-acetyl-alpha-D-glucosaminyl L-malate deacetylase 2 from Bacillus subtilis (strain 168).